Reading from the N-terminus, the 848-residue chain is Neprilysin-11 (848 aa).

The Cytoplasmic portion of the chain corresponds to 1–74 (MPFGNDPPDY…WWKSRTTMEK (74 aa)). A helical; Signal-anchor for type II membrane protein transmembrane segment spans residues 75-95 (LLLPVLLLFCLLTAVLLAVII). The Extracellular portion of the chain corresponds to 96–848 (NTDKRIEAMK…VNPDHKCIVW (753 aa)). Residues 108–161 (HATQTEHAGFGDPTENPTKTAEDPRVPPIVPEAPTSPEPEVTTSTEKPKEPEVC) are disordered. Residues 133–144 (VPPIVPEAPTSP) are compositionally biased toward pro residues. A Peptidase M13 domain is found at 160–848 (VCSTPGCVRA…VNPDHKCIVW (689 aa)). C161 and C166 form a disulfide bridge. N178, N249, N284, N312, N337, N364, N398, and N438 each carry an N-linked (GlcNAc...) asparagine glycan. Disulfide bonds link C184/C833, C192/C793, C247/C509, and C719/C845. A Zn(2+)-binding site is contributed by H682. E683 is an active-site residue. H686 provides a ligand contact to Zn(2+). An N-linked (GlcNAc...) asparagine glycan is attached at N726. Residue E744 participates in Zn(2+) binding. D748 functions as the Proton donor in the catalytic mechanism.

Belongs to the peptidase M13 family. Zn(2+) serves as cofactor.

It is found in the cell membrane. Probable cell surface protease. The protein is Neprilysin-11 (nep-11) of Caenorhabditis elegans.